The following is a 315-amino-acid chain: tRNA dimethylallyltransferase (315 aa).

14–21 (GPTASGKT) serves as a coordination point for ATP. 16–21 (TASGKT) lines the substrate pocket. Interaction with substrate tRNA stretches follow at residues 39–42 (DSAL), 163–167 (QRIQR), and 248–253 (RCVGYR).

The protein belongs to the IPP transferase family. Monomer. Mg(2+) is required as a cofactor.

It catalyses the reaction adenosine(37) in tRNA + dimethylallyl diphosphate = N(6)-dimethylallyladenosine(37) in tRNA + diphosphate. In terms of biological role, catalyzes the transfer of a dimethylallyl group onto the adenine at position 37 in tRNAs that read codons beginning with uridine, leading to the formation of N6-(dimethylallyl)adenosine (i(6)A). This is tRNA dimethylallyltransferase from Paraburkholderia phytofirmans (strain DSM 17436 / LMG 22146 / PsJN) (Burkholderia phytofirmans).